Consider the following 78-residue polypeptide: Large ribosomal subunit protein bL28 (78 aa).

This sequence belongs to the bacterial ribosomal protein bL28 family.

The polypeptide is Large ribosomal subunit protein bL28 (Synechococcus sp. (strain WH7803)).